Here is a 519-residue protein sequence, read N- to C-terminus: Cell division cycle protein 20 homolog B (519 aa).

The interval 77-106 (WQLSPARDPESSSSVEEGPPSHTPESLASG) is disordered. The span at 87–96 (SSSSVEEGPP) shows a compositional bias: low complexity. WD repeat units follow at residues 229–266 (RNDYYLNTLDWSSQNLVAVALGTSVYIWNGQNHSWIEN), 271–310 (VCCHYVSSVTWMREGSCLAVGTSEGEVQLWDAITKKQLRN), 353–392 (YHKEAVCSLKWSPDGRLLSSGCNDGLLTIWPHDPGAGVQG), 399–441 (PQST…NIQT), 443–484 (STQS…RSGG), and 487–519 (GHRDRVLHLSLSPDQTRLFSAAADGTACVWKCC).

The protein belongs to the WD repeat CDC20/Fizzy family. Expressed in multiciliated cells (MCCs).

The protein localises to the cytoplasm. Its function is as follows. Protein regulator of centriole-deuterosome disengagement and subsequently participates in the ciliogenesis in multiciliated cells (MCCs). This Mus musculus (Mouse) protein is Cell division cycle protein 20 homolog B.